A 375-amino-acid chain; its full sequence is Acetylornithine aminotransferase (375 aa).

Residues 93-94 (GT) and Phe120 contribute to the pyridoxal 5'-phosphate site. Residue Arg123 coordinates N(2)-acetyl-L-ornithine. Residue 205 to 208 (DEVQ) participates in pyridoxal 5'-phosphate binding. Lys234 is subject to N6-(pyridoxal phosphate)lysine. Thr262 is a N(2)-acetyl-L-ornithine binding site. Thr263 contributes to the pyridoxal 5'-phosphate binding site.

It belongs to the class-III pyridoxal-phosphate-dependent aminotransferase family. ArgD subfamily. In terms of assembly, homodimer. Requires pyridoxal 5'-phosphate as cofactor.

It localises to the cytoplasm. The catalysed reaction is N(2)-acetyl-L-ornithine + 2-oxoglutarate = N-acetyl-L-glutamate 5-semialdehyde + L-glutamate. It participates in amino-acid biosynthesis; L-arginine biosynthesis; N(2)-acetyl-L-ornithine from L-glutamate: step 4/4. In Staphylococcus epidermidis (strain ATCC 35984 / DSM 28319 / BCRC 17069 / CCUG 31568 / BM 3577 / RP62A), this protein is Acetylornithine aminotransferase.